The chain runs to 155 residues: 6,7-dimethyl-8-ribityllumazine synthase (155 aa).

Residues Phe-24, 58–60 (AFE), and 82–84 (AII) each bind 5-amino-6-(D-ribitylamino)uracil. Residue 87-88 (ST) coordinates (2S)-2-hydroxy-3-oxobutyl phosphate. The Proton donor role is filled by His-90. Phe-115 provides a ligand contact to 5-amino-6-(D-ribitylamino)uracil. Residue Arg-129 participates in (2S)-2-hydroxy-3-oxobutyl phosphate binding.

The protein belongs to the DMRL synthase family.

It carries out the reaction (2S)-2-hydroxy-3-oxobutyl phosphate + 5-amino-6-(D-ribitylamino)uracil = 6,7-dimethyl-8-(1-D-ribityl)lumazine + phosphate + 2 H2O + H(+). The protein operates within cofactor biosynthesis; riboflavin biosynthesis; riboflavin from 2-hydroxy-3-oxobutyl phosphate and 5-amino-6-(D-ribitylamino)uracil: step 1/2. Catalyzes the formation of 6,7-dimethyl-8-ribityllumazine by condensation of 5-amino-6-(D-ribitylamino)uracil with 3,4-dihydroxy-2-butanone 4-phosphate. This is the penultimate step in the biosynthesis of riboflavin. The sequence is that of 6,7-dimethyl-8-ribityllumazine synthase from Chlorobium phaeobacteroides (strain BS1).